The primary structure comprises 507 residues: Fumarate hydratase, mitochondrial (507 aa).

A mitochondrion-targeting transit peptide spans 1 to 41; that stretch reads MYRALRLLARSRRLLRVPSAGAAVSGEATTLPRCAPNVARM. K58, K63, and K77 each carry N6-acetyllysine; alternate. K58, K63, and K77 each carry N6-succinyllysine; alternate. T82 is modified (phosphothreonine). An N6-acetyllysine; alternate mark is found at K112 and K119. N6-succinyllysine; alternate is present on residues K112 and K119. Residues 142–144, 173–176, and 183–185 contribute to the substrate site; these read SGT, HPND, and SSN. K210 bears the N6-acetyllysine mark. At K220 the chain carries N6-acetyllysine; alternate. K220 is modified (N6-succinyllysine; alternate). Residue T231 participates in substrate binding. H232 acts as the Proton donor/acceptor in catalysis. A Phosphothreonine modification is found at T233. K289 carries the post-translational modification N6-acetyllysine; alternate. K289 carries the post-translational modification N6-succinyllysine; alternate. S362 is a catalytic residue. Substrate contacts are provided by residues S363 and 368–370; that span reads KVN. The residue at position 363 (S363) is a Phosphoserine. K464 and K470 each carry N6-succinyllysine. Position 499 is an N6-acetyllysine (K499).

This sequence belongs to the class-II fumarase/aspartase family. Fumarase subfamily. In terms of assembly, homotetramer. Interacts with H2AZ1. Phosphorylation at Thr-233 by PRKDC in response to DNA damage promotes translocation to the nucleus and recruitment to DNA double-strand breaks (DSBs).

It is found in the mitochondrion. The protein localises to the cytoplasm. The protein resides in the cytosol. Its subcellular location is the nucleus. It localises to the chromosome. The enzyme catalyses (S)-malate = fumarate + H2O. Its pathway is carbohydrate metabolism; tricarboxylic acid cycle; (S)-malate from fumarate: step 1/1. Catalyzes the reversible stereospecific interconversion of fumarate to L-malate. Experiments in different species have demonstrated that specific isoforms of this protein act in defined pathways and favor one direction over the other. In terms of biological role, catalyzes the hydration of fumarate to L-malate in the tricarboxylic acid (TCA) cycle to facilitate a transition step in the production of energy in the form of NADH. Its function is as follows. Catalyzes the dehydration of L-malate to fumarate. Fumarate metabolism in the cytosol plays a role during urea cycle and arginine metabolism; fumarate being a by-product of the urea cycle and amino-acid catabolism. Also plays a role in DNA repair by promoting non-homologous end-joining (NHEJ). In response to DNA damage and phosphorylation by PRKDC, translocates to the nucleus and accumulates at DNA double-strand breaks (DSBs): acts by catalyzing formation of fumarate, an inhibitor of KDM2B histone demethylase activity, resulting in enhanced dimethylation of histone H3 'Lys-36' (H3K36me2). This Mus musculus (Mouse) protein is Fumarate hydratase, mitochondrial.